A 507-amino-acid polypeptide reads, in one-letter code: Cytochrome P450 monooxygenase cloA (507 aa).

A helical membrane pass occupies residues 15 to 35 (WTWILLTTCIALTSPLVLKGI). An N-linked (GlcNAc...) asparagine glycan is attached at Asn247. Position 450 (Cys450) interacts with heme.

This sequence belongs to the cytochrome P450 family. Heme serves as cofactor.

The protein localises to the membrane. It functions in the pathway alkaloid biosynthesis; ergot alkaloid biosynthesis. Functionally, cytochrome P450 monooxygenase; part of the gene cluster that mediates the biosynthesis of fungal ergot alkaloid. DmaW catalyzes the first step of ergot alkaloid biosynthesis by condensing dimethylallyl diphosphate (DMAP) and tryptophan to form 4-dimethylallyl-L-tryptophan. The second step is catalyzed by the methyltransferase easF that methylates 4-dimethylallyl-L-tryptophan in the presence of S-adenosyl-L-methionine, resulting in the formation of 4-dimethylallyl-L-abrine. The catalase easC and the FAD-dependent oxidoreductase easE then transform 4-dimethylallyl-L-abrine to chanoclavine-I which is further oxidized by easD in the presence of NAD(+), resulting in the formation of chanoclavine-I aldehyde. Agroclavine dehydrogenase easG then mediates the conversion of chanoclavine-I aldehyde to agroclavine via a non-enzymatic adduct reaction: the substrate is an iminium intermediate that is formed spontaneously from chanoclavine-I aldehyde in the presence of glutathione. The presence of easA is not required to complete this reaction. Further conversion of agroclavine to paspalic acid is a two-step process involving oxidation of agroclavine to elymoclavine and of elymoclavine to paspalic acid, the second step being performed by the elymoclavine oxidase cloA. Paspalic acid is then further converted to D-lysergic acid. Ergopeptines are assembled from D-lysergic acid and three different amino acids by the D-lysergyl-peptide-synthetases composed each of a monomudular and a trimodular nonribosomal peptide synthetase subunit. LpsB and lpsC encode the monomodular subunits responsible for D-lysergic acid activation and incorporation into the ergopeptine backbone. LpsA1 and A2 subunits encode the trimodular nonribosomal peptide synthetase assembling the tripeptide portion of ergopeptines. LpsA1 is responsible for formation of the major ergopeptine, ergotamine, and lpsA2 for alpha-ergocryptine, the minor ergopeptine of the total alkaloid mixture elaborated by C.purpurea. D-lysergyl-tripeptides are assembled by the nonribosomal peptide synthetases and released as N-(D-lysergyl-aminoacyl)-lactams. Cyclolization of the D-lysergyl-tripeptides is performed by the Fe(2+)/2-ketoglutarate-dependent dioxygenase easH which introduces a hydroxyl group into N-(D-lysergyl-aminoacyl)-lactam at alpha-C of the aminoacyl residue followed by spontaneous condensation with the terminal lactam carbonyl group. In Claviceps purpurea (Ergot fungus), this protein is Cytochrome P450 monooxygenase cloA.